Consider the following 582-residue polypeptide: Phosphoglucomutase, cytoplasmic (582 aa).

2 residues coordinate alpha-D-glucose 1,6-bisphosphate: Arg25 and Ser124. Ser124 functions as the Phosphoserine intermediate in the catalytic mechanism. Mg(2+)-binding residues include Ser124, Asp300, Asp302, and Asp304. Ser124 carries the post-translational modification Phosphoserine. The alpha-D-glucose 1,6-bisphosphate site is built by Asp304, Arg305, Thr368, Glu387, Ser389, and Lys400.

The protein belongs to the phosphohexose mutase family. Monomer. Mg(2+) serves as cofactor.

Its subcellular location is the cytoplasm. The enzyme catalyses alpha-D-glucose 1-phosphate = alpha-D-glucose 6-phosphate. It carries out the reaction O-phospho-L-seryl-[protein] + alpha-D-glucose 1-phosphate = alpha-D-glucose 1,6-bisphosphate + L-seryl-[protein]. It catalyses the reaction alpha-D-glucose 1,6-bisphosphate + L-seryl-[protein] = O-phospho-L-seryl-[protein] + alpha-D-glucose 6-phosphate. In terms of biological role, catalyzes the reversible isomerization of alpha-D-glucose 1-phosphate to alpha-D-glucose 6-phosphate. The mechanism proceeds via the intermediate compound alpha-D-glucose 1,6-bisphosphate. This enzyme participates in both the breakdown and synthesis of glucose. The chain is Phosphoglucomutase, cytoplasmic (PGM1) from Pisum sativum (Garden pea).